We begin with the raw amino-acid sequence, 60 residues long: QPLRKLCILHRNPGRCYQKIPAFYYNQKKKQCEGFTWSGCGGNSNRFKTIEECRRTCIRK.

The region spanning 7–57 (CILHRNPGRCYQKIPAFYYNQKKKQCEGFTWSGCGGNSNRFKTIEECRRTC) is the BPTI/Kunitz inhibitor domain. Cystine bridges form between C7–C57, C16–C40, and C32–C53.

This sequence belongs to the venom Kunitz-type family. In terms of tissue distribution, expressed by the venom gland.

The protein resides in the secreted. In terms of biological role, serine protease inhibitor homolog that blocks voltage-gated potassium channels (Kv1.1/KCNA1, Kv1.2/KCNA2, and Kv1.6/KCNA6) (IC(50)=0.13-50 nM). The sequence is that of Kunitz-type serine protease inhibitor homolog dendrotoxin I from Dendroaspis polylepis polylepis (Black mamba).